Reading from the N-terminus, the 332-residue chain is Fructose-1,6-bisphosphatase class 1 (332 aa).

Mg(2+) is bound by residues Glu94, Asp116, Leu118, and Asp119. Residues 119-122, Asn211, Tyr239, 257-259, and Lys269 contribute to the substrate site; these read DGSS and YLY. Glu275 contributes to the Mg(2+) binding site.

This sequence belongs to the FBPase class 1 family. Homotetramer. Mg(2+) serves as cofactor.

Its subcellular location is the cytoplasm. It catalyses the reaction beta-D-fructose 1,6-bisphosphate + H2O = beta-D-fructose 6-phosphate + phosphate. The protein operates within carbohydrate biosynthesis; Calvin cycle. This Synechococcus sp. (strain JA-3-3Ab) (Cyanobacteria bacterium Yellowstone A-Prime) protein is Fructose-1,6-bisphosphatase class 1.